The primary structure comprises 432 residues: Phosphomethylpyrimidine synthase (432 aa).

Residues Asn66, Met95, Tyr124, His163, 185–187, 226–229, and Glu265 each bind substrate; these read SRG and DGLR. His269 is a Zn(2+) binding site. Residue Tyr292 coordinates substrate. His333 is a binding site for Zn(2+). [4Fe-4S] cluster-binding residues include Cys409, Cys412, and Cys416.

This sequence belongs to the ThiC family. [4Fe-4S] cluster is required as a cofactor.

It catalyses the reaction 5-amino-1-(5-phospho-beta-D-ribosyl)imidazole + S-adenosyl-L-methionine = 4-amino-2-methyl-5-(phosphooxymethyl)pyrimidine + CO + 5'-deoxyadenosine + formate + L-methionine + 3 H(+). Its pathway is cofactor biosynthesis; thiamine diphosphate biosynthesis. In terms of biological role, catalyzes the synthesis of the hydroxymethylpyrimidine phosphate (HMP-P) moiety of thiamine from aminoimidazole ribotide (AIR) in a radical S-adenosyl-L-methionine (SAM)-dependent reaction. This Thermoanaerobacter pseudethanolicus (strain ATCC 33223 / 39E) (Clostridium thermohydrosulfuricum) protein is Phosphomethylpyrimidine synthase.